Here is a 740-residue protein sequence, read N- to C-terminus: Phosphoribosylformylglycinamidine synthase subunit PurL (740 aa).

The active site involves histidine 53. Residues tyrosine 56 and lysine 95 each contribute to the ATP site. Glutamate 97 contributes to the Mg(2+) binding site. Substrate contacts are provided by residues 98–101 (SHNH) and arginine 120. Histidine 99 acts as the Proton acceptor in catalysis. Aspartate 121 contacts Mg(2+). Glutamine 244 contacts substrate. Position 274 (aspartate 274) interacts with Mg(2+). 318–320 (ESQ) lines the substrate pocket. ATP is bound by residues aspartate 501 and glycine 538. Asparagine 539 provides a ligand contact to Mg(2+). Residue serine 541 coordinates substrate.

The protein belongs to the FGAMS family. As to quaternary structure, monomer. Part of the FGAM synthase complex composed of 1 PurL, 1 PurQ and 2 PurS subunits.

It localises to the cytoplasm. It carries out the reaction N(2)-formyl-N(1)-(5-phospho-beta-D-ribosyl)glycinamide + L-glutamine + ATP + H2O = 2-formamido-N(1)-(5-O-phospho-beta-D-ribosyl)acetamidine + L-glutamate + ADP + phosphate + H(+). The protein operates within purine metabolism; IMP biosynthesis via de novo pathway; 5-amino-1-(5-phospho-D-ribosyl)imidazole from N(2)-formyl-N(1)-(5-phospho-D-ribosyl)glycinamide: step 1/2. In terms of biological role, part of the phosphoribosylformylglycinamidine synthase complex involved in the purines biosynthetic pathway. Catalyzes the ATP-dependent conversion of formylglycinamide ribonucleotide (FGAR) and glutamine to yield formylglycinamidine ribonucleotide (FGAM) and glutamate. The FGAM synthase complex is composed of three subunits. PurQ produces an ammonia molecule by converting glutamine to glutamate. PurL transfers the ammonia molecule to FGAR to form FGAM in an ATP-dependent manner. PurS interacts with PurQ and PurL and is thought to assist in the transfer of the ammonia molecule from PurQ to PurL. This is Phosphoribosylformylglycinamidine synthase subunit PurL from Lactobacillus delbrueckii subsp. bulgaricus (strain ATCC 11842 / DSM 20081 / BCRC 10696 / JCM 1002 / NBRC 13953 / NCIMB 11778 / NCTC 12712 / WDCM 00102 / Lb 14).